Consider the following 653-residue polypeptide: Zinc finger protein 59 (653 aa).

One can recognise a KRAB domain in the interval valine 14 to proline 86. C2H2-type zinc fingers lie at residues tyrosine 172–histidine 194, tyrosine 200–histidine 222, phenylalanine 256–histidine 278, tyrosine 284–histidine 306, phenylalanine 312–histidine 334, phenylalanine 340–histidine 362, phenylalanine 368–histidine 390, leucine 396–histidine 418, phenylalanine 424–histidine 446, tyrosine 452–histidine 474, phenylalanine 480–histidine 502, phenylalanine 508–histidine 530, phenylalanine 536–histidine 558, tyrosine 564–histidine 586, phenylalanine 592–histidine 614, and phenylalanine 620–histidine 642.

It belongs to the krueppel C2H2-type zinc-finger protein family. As to expression, expressed predominantly in the testis (at protein level).

Its subcellular location is the nucleus. Functionally, may have a role during differentiation processes. This chain is Zinc finger protein 59 (Zfp59), found in Mus musculus (Mouse).